The following is a 529-amino-acid chain: GMP synthase [glutamine-hydrolyzing] (529 aa).

Residues 3 to 204 enclose the Glutamine amidotransferase type-1 domain; that stretch reads TVAIVDFGSQ…FLKIAGCTRD (202 aa). Cysteine 87 serves as the catalytic Nucleophile. Catalysis depends on residues histidine 179 and glutamate 181. Residues 205–395 form the GMPS ATP-PPase domain; that stretch reads WTMGSFLHTQ…LGLPSAILDR (191 aa). 232–238 is an ATP binding site; sequence SGGVDSS.

As to quaternary structure, homodimer.

It catalyses the reaction XMP + L-glutamine + ATP + H2O = GMP + L-glutamate + AMP + diphosphate + 2 H(+). Its pathway is purine metabolism; GMP biosynthesis; GMP from XMP (L-Gln route): step 1/1. Its function is as follows. Catalyzes the synthesis of GMP from XMP. The sequence is that of GMP synthase [glutamine-hydrolyzing] from Anaplasma marginale (strain St. Maries).